A 576-amino-acid polypeptide reads, in one-letter code: Putative diflavin flavoprotein A 1 (576 aa).

The interval 48-240 is zinc metallo-hydrolase; it reads RNGTTYNSFL…LAIKTVATGH (193 aa). Residues histidine 97, glutamate 99, aspartate 101, histidine 164, aspartate 183, and histidine 240 each coordinate Fe cation. The Flavodoxin-like domain maps to 269-431; it reads VALFYAEDYG…DLEKALGRIS (163 aa). Positions 432–576 are flavodoxin-reductase-like; that stretch reads TGLYIITTKK…VHHRKVGNHY (145 aa).

It in the N-terminal section; belongs to the zinc metallo-hydrolase group 3 family. This sequence in the C-terminal section; belongs to the flavodoxin reductase family. Fe cation is required as a cofactor.

Functionally, mediates electron transfer from NADH to oxygen, reducing it to water. This modular protein has 3 redox cofactors, in other organisms the same activity requires 2 or 3 proteins. The sequence is that of Putative diflavin flavoprotein A 1 (dfa1) from Nostoc sp. (strain PCC 7120 / SAG 25.82 / UTEX 2576).